The primary structure comprises 108 residues: Protein YcgL (108 aa).

A YcgL domain is found at 12–96; the sequence is MFCVIYRSSK…PPEDLLKQHL (85 aa).

In Escherichia coli O127:H6 (strain E2348/69 / EPEC), this protein is Protein YcgL.